The following is a 458-amino-acid chain: Flavonol 3-O-glucosyltransferase F3GT2 (458 aa).

The active-site Proton acceptor is H20. H20 contacts an anthocyanidin. Residue D119 is the Charge relay of the active site. T141 contributes to the UDP-alpha-D-glucose binding site. H150 lines the an anthocyanidin pocket. UDP-alpha-D-glucose contacts are provided by A333, Q335, H350, W353, N354, S355, and E358. G373 is an an anthocyanidin binding site. UDP-alpha-D-glucose-binding residues include D374 and Q375.

This sequence belongs to the UDP-glycosyltransferase family. In terms of tissue distribution, expressed in ovaries.

It catalyses the reaction a flavonol + UDP-alpha-D-glucose = a flavonol 3-O-beta-D-glucoside + UDP + H(+). It functions in the pathway flavonoid metabolism. Functionally, catalyzes the glucosylation of quercetin. Preferentially uses UDP-glucose as sugar donor, but is also able to use UDP-gal and UDP-xyl. Is probably not required for the accumulation of anthocyanin in red-fleshed kiwifruit varieties. In Actinidia chinensis var. chinensis (Chinese soft-hair kiwi), this protein is Flavonol 3-O-glucosyltransferase F3GT2.